Consider the following 261-residue polypeptide: Glucosamine-6-phosphate deaminase (261 aa).

Aspartate 67 serves as the catalytic Proton acceptor; for enolization step. Aspartate 136 (for ring-opening step) is an active-site residue. The active-site Proton acceptor; for ring-opening step is histidine 138. Glutamate 143 (for ring-opening step) is an active-site residue.

It belongs to the glucosamine/galactosamine-6-phosphate isomerase family. NagB subfamily.

It catalyses the reaction alpha-D-glucosamine 6-phosphate + H2O = beta-D-fructose 6-phosphate + NH4(+). Its pathway is amino-sugar metabolism; N-acetylneuraminate degradation; D-fructose 6-phosphate from N-acetylneuraminate: step 5/5. Functionally, catalyzes the reversible isomerization-deamination of glucosamine 6-phosphate (GlcN6P) to form fructose 6-phosphate (Fru6P) and ammonium ion. The polypeptide is Glucosamine-6-phosphate deaminase (Beutenbergia cavernae (strain ATCC BAA-8 / DSM 12333 / CCUG 43141 / JCM 11478 / NBRC 16432 / NCIMB 13614 / HKI 0122)).